Reading from the N-terminus, the 873-residue chain is Nonsense-mediated mRNA decay factor SMG8 (873 aa).

The disordered stretch occupies residues 531–604 (AKKMAQREDE…ESMASKTERE (74 aa)). Positions 540–550 (ELAEEDTDLDI) are enriched in acidic residues. Low complexity-rich tracts occupy residues 551–562 (PESLLDPDSTSP) and 574–583 (SSSESSSQES). The span at 591–604 (SRRDESMASKTERE) shows a compositional bias: basic and acidic residues.

The protein belongs to the SMG8 family.

Functionally, involved in nonsense-mediated decay (NMD) of mRNAs containing premature stop codons. Probable component of kinase complex containing smg-1 and recruited to stalled ribosomes. This is Nonsense-mediated mRNA decay factor SMG8 (smg-8) from Caenorhabditis elegans.